The following is a 113-amino-acid chain: Protein suex-1 (113 aa).

An N-terminal signal peptide occupies residues methionine 1–alanine 22.

This Caenorhabditis elegans protein is Protein suex-1.